A 195-amino-acid polypeptide reads, in one-letter code: Ras-related protein Rab-31 (195 aa).

GTP contacts are provided by Gly16, Gly18, Lys19, Ser20, Ser21, Asp32, and His33. A Mg(2+)-binding site is contributed by Ser20. Short sequence motifs (switch) lie at residues 30–42 and 63–79; these read HFDH…IGAS and AGQE…YRGS. Ser36 carries the phosphoserine modification. Positions 38, 64, 119, 122, 150, and 151 each coordinate GTP. Thr38 is a binding site for Mg(2+). Residues Cys194 and Cys195 are each lipidated (S-geranylgeranyl cysteine).

The protein belongs to the small GTPase superfamily. Rab family. Interacts with OCRL. Interacts with NGFR. Interacts (in GDP-bound form) with RIN3 and GAPVD1, which function as guanine exchange factors (GEF). Interacts (in GTP-bound form) with EEA1. Interacts with EGFR. Interacts (in GTP-bound form) with APPL2; interaction contributes to or enhances recruitment of APPL2 to the phagosomes; interaction enhances Fc-gamma receptor-mediated phagocytosis through PI3K/Akt signaling in macrophages. Requires Mg(2+) as cofactor. As to expression, highest expression in placenta and brain with lower levels in heart and lung. Not detected in liver, skeletal muscle, kidney or pancreas.

Its subcellular location is the golgi apparatus. The protein resides in the trans-Golgi network. It is found in the trans-Golgi network membrane. The protein localises to the early endosome. It localises to the cytoplasmic vesicle. Its subcellular location is the phagosome. The protein resides in the phagosome membrane. The catalysed reaction is GTP + H2O = GDP + phosphate + H(+). With respect to regulation, regulated by guanine nucleotide exchange factors (GEFs) including RIN3 and GAPVD1 which promote the exchange of bound GDP for free GTP. Regulated by GTPase activating proteins (GAPs) which increase the GTP hydrolysis activity. Inhibited by GDP dissociation inhibitors (GDIs) which prevent Rab-GDP dissociation. Its function is as follows. The small GTPases Rab are key regulators of intracellular membrane trafficking, from the formation of transport vesicles to their fusion with membranes. Rabs cycle between an inactive GDP-bound form and an active GTP-bound form that is able to recruit to membranes different set of downstream effectors directly responsible for vesicle formation, movement, tethering and fusion. Required for the integrity and for normal function of the Golgi apparatus and the trans-Golgi network. Plays a role in insulin-stimulated translocation of GLUT4 to the cell membrane. Plays a role in M6PR transport from the trans-Golgi network to endosomes. Plays a role in the internalization of EGFR from the cell membrane into endosomes. Plays a role in the maturation of phagosomes that engulf pathogens, such as S.aureus and M.tuberculosis. The polypeptide is Ras-related protein Rab-31 (Homo sapiens (Human)).